The chain runs to 336 residues: Fimbrial adhesin PapGII (336 aa).

Positions 1-20 (MKKWFPALLFSLCVSGESSA) are cleaved as a signal peptide. 2 cysteine pairs are disulfide-bonded: cysteine 64/cysteine 138 and cysteine 217/cysteine 249. D-galactose contacts are provided by residues glutamate 79 and 124–127 (GYKW).

This sequence belongs to the adhesin PapG family.

It is found in the secreted. The protein resides in the fimbrium. Tip adhesin component of type P pili that plays a critical role in kidney infection through targeted interaction with the globoseries glycolipids containing the Gal-alpha(1-4)-Gal disaccharide present on uroepithelial cells. In turn, transcriptionally regulates host gene expression in kidney cells, leading to inflammatory pathway activation and renal tissue damage. Acts thereby as key determinant of invasive uropathogenic E.coli (UPEC), which cause pyelonephritis and urinary-source bacteremia. This Escherichia coli protein is Fimbrial adhesin PapGII.